A 1104-amino-acid chain; its full sequence is Transient receptor potential cation channel subfamily M member 8 (1104 aa).

Positions 1–22 (MSFEGARLSMRSRRNGTMGSTR) are disordered. Topologically, residues 1–733 (MSFEGARLSM…LWYYVAFFTS (733 aa)) are cytoplasmic. The chain crosses the membrane as a helical span at residues 734–758 (PFVVFSWNVVFYIAFLLLFAYVLLM). Over 759–765 (DFHSVPH) the chain is Extracellular. Residues 766-789 (TPELILYALVFVLFCDEVRQWYMN) form a helical membrane-spanning segment. Ca(2+) contacts are provided by Glu782 and Gln785. Residues 790-796 (GVNYFTD) lie on the Cytoplasmic side of the membrane. The chain crosses the membrane as a helical span at residues 797-817 (LWNVMDTLGLFYFIAGIVFRL). Positions 799 and 802 each coordinate Ca(2+). The Extracellular segment spans residues 818 to 822 (HSSNK). The helical transmembrane segment at 823-848 (SSLYSGRVIFCLDYIIFTLRLIHIFT) threads the bilayer. Residues 849 to 853 (VSRNL) are Cytoplasmic-facing. Residues 854 to 890 (GPKIIMLQRMLIDVFFFLFLFAVWMVAFGVARQGILR) traverse the membrane as a helical segment. The Extracellular portion of the chain corresponds to 891–895 (QNEQR). Residues 896 to 912 (WRWIFRSVIYEPYLAMF) constitute an intramembrane region (pore-forming). Topologically, residues 913–953 (GQVPSDVDSTTYDFSHCTFSGNESKPLCVELDEHNLPRFPE) are extracellular. Asn934 carries an N-linked (GlcNAc...) (complex) asparagine glycan. A helical membrane pass occupies residues 954–984 (WITIPLVCIYMLSTNILLVNLLVAMFGYTVG). Residues 985 to 1104 (IVQENNDQVW…LLKEIANNIK (120 aa)) are Cytoplasmic-facing. Positions 1069 to 1104 (TKANDNSEEMRHRFRQLDSKLNDLKSLLKEIANNIK) form a coiled coil.

The protein belongs to the transient receptor (TC 1.A.4) family. LTrpC subfamily. TRPM8 sub-subfamily. Homotetramer. Interacts (via N-terminus and C-terminus domains) with TCAF1; the interaction stimulates TRPM8 channel activity. Interacts (via N-terminus and C-terminus domains) with TCAF2; the interaction inhibits TRPM8 channel activity. In terms of processing, N-glycosylation is not essential for but facilitates cell surface expression, multimerization, association with lipid rafts and ion channel activity. Expressed in dorsal root and trigeminal ganglia. Specifically expressed in a subset of pain- and temperature-sensing neurons. Not expressed in heavily myelinated neurons. Not expressed in neurons expressing TRPA1 or TRPV1.

It is found in the cell membrane. It localises to the membrane raft. It carries out the reaction Ca(2+)(in) = Ca(2+)(out). The enzyme catalyses Na(+)(in) = Na(+)(out). The catalysed reaction is K(+)(in) = K(+)(out). Its activity is regulated as follows. Activated by cold temperatures and by both natural and synthetic cooling compounds such as menthol and icilin. Activation of the channel requires the presence of PI(4,5)P2; PI(4,5)P2 is necessary to gate the channel. Activated by intracellular Ca(2+). Its function is as follows. Non-selective ion channel permeable to monovalent and divalent cations, including Na(+), K(+), and Ca(2+), with higher permeability for Ca(2+). Activated by multiple factors, such as temperature, voltage, pressure, and changes in osmolality. Activated by cool temperatures (&lt;23-28 degrees Celsius) and by chemical ligands evoking a sensation of coolness, such as menthol and icilin, therefore plays a central role in the detection of environmental cold temperatures. TRPM8 is a voltage-dependent channel; its activation by cold or chemical ligands shifts its voltage thresholds towards physiological membrane potentials, leading to the opening of the channel. In addition to its critical role in temperature sensing, regulates basal tear secretion by sensing evaporation-induced cooling and changes in osmolality. In Mus musculus (Mouse), this protein is Transient receptor potential cation channel subfamily M member 8 (Trpm8).